Consider the following 166-residue polypeptide: Probable chemoreceptor glutamine deamidase CheD (166 aa).

This sequence belongs to the CheD family.

The catalysed reaction is L-glutaminyl-[protein] + H2O = L-glutamyl-[protein] + NH4(+). In terms of biological role, probably deamidates glutamine residues to glutamate on methyl-accepting chemotaxis receptors (MCPs), playing an important role in chemotaxis. This Oceanobacillus iheyensis (strain DSM 14371 / CIP 107618 / JCM 11309 / KCTC 3954 / HTE831) protein is Probable chemoreceptor glutamine deamidase CheD.